Reading from the N-terminus, the 464-residue chain is MKNTAGILAIAGMLIAPLAHADVILHAFNWKYSEVTAKADLIKGAGYKQVLISPPLKSSGNEWWARYQPQDLRLVDSPLGNKQDLEQLIAAMQARGIAVYADVVLNHMANESWKRNDLNYPGTELLGQYAANPDYYSRQRLFGDLGQNLLSASDFHPEGCITDWSDPGHVQYWRLCGGAGDKGLPDLDPNNWVVSQQQAYLKALKGMGIKGFRVDAVKHMSDYQINAVFTPEIKQGMHVFGEVITTGGAGSTDYERFLKPYLDNSGQGAYDFPLFASLRGALGYGGSMNQLADPGAYGQALPGNRAVTFAITHDIPTNDGFRYQILNQTDEKLAYAYLLGRDGGSPLVYSDHGETQDKDGLRWQDYYLRSDLKGMIRFHNAVQGQPMQLIGSGDCFVLFKRGKQGLVGVNKCDYEQEYWLDTAKFELNWYRNYKDVLDQSAVINVQSQWVRVAMPARRPPLAAE.

Residues 1–21 (MKNTAGILAIAGMLIAPLAHA) form the signal peptide. H107 and R213 together coordinate substrate. D215 functions as the Nucleophile in the catalytic mechanism. Position 218–219 (218–219 (KH)) interacts with substrate. Residue E242 is the Proton donor of the active site. The substrate site is built by G247 and H313.

The protein belongs to the glycosyl hydrolase 13 family.

It is found in the secreted. The catalysed reaction is Endohydrolysis of (1-&gt;4)-alpha-D-glucosidic linkages in polysaccharides containing three or more (1-&gt;4)-alpha-linked D-glucose units.. The chain is Alpha-amylase from Aeromonas hydrophila.